The following is a 77-amino-acid chain: U9-lycotoxin-Ls1a (77 aa).

Positions 1–20 (MKLLLFTALVLVVIVSLIEA) are cleaved as a signal peptide. Residues 21–26 (EAENER) constitute a propeptide that is removed on maturation.

The protein belongs to the neurotoxin 19 (CSTX) family. 08 (U8-Lctx) subfamily. Contains 4 disulfide bonds. In terms of tissue distribution, expressed by the venom gland.

Its subcellular location is the secreted. The polypeptide is U9-lycotoxin-Ls1a (Lycosa singoriensis (Wolf spider)).